The sequence spans 92 residues: Calitoxin (92 aa).

The first 20 residues, 1–20, serve as a signal peptide directing secretion; that stretch reads MKTQVLVVLVLCVVFCLAES. Residues 21–42 constitute a propeptide that is removed on maturation; sequence RNSMTSEERGLVSLMRQRDDIA. 3 disulfide bridges follow: Cys-47/Cys-86, Cys-49/Cys-77, and Cys-67/Cys-87.

It belongs to the sea anemone sodium channel inhibitory toxin family. As to expression, expressed both outside and in acontia, a specialised envenomation structure laden with batteries of venom-containing nematocysts found only in the superfamily Metridioidea.

The protein resides in the secreted. It localises to the nematocyst. Functionally, in neuromuscular preparation of crustaceans, the toxin increased neurotransmitter release, causing repetitive firing of the axons. May affect sodium channels (Nav). This chain is Calitoxin, found in Calliactis polypus (Hermit crab anemone).